A 782-amino-acid polypeptide reads, in one-letter code: Sulfate permease family protein 3 (782 aa).

The next 12 membrane-spanning stretches (helical) occupy residues 30–52 (YACS…TWLP), 64–84 (LSGG…LASI), 86–106 (GVPP…YIFF), 113–133 (ALGG…KVML), 196–216 (IHVA…MGVF), 232–252 (GFVV…MLGI), 274–294 (LDNV…FLVF), 302–322 (WLNS…VVGI), 359–379 (HIGL…ITVA), 398–418 (ALGF…TSGF), 433–453 (LTCL…GPAL), and 497–517 (FFLT…GFAV). The STAS domain maps to 546-700 (KRDLERIQGN…NKVGDAVKAA (155 aa)). Residues 728–742 (IDEESSDSNDNDDAE) show a composition bias toward acidic residues. A disordered region spans residues 728–782 (IDEESSDSNDNDDAEIQERITEESENSEEVMSETSVSIEDATSLTSSRNSINSEE). Polar residues predominate over residues 767-782 (DATSLTSSRNSINSEE).

Belongs to the SLC26A/SulP transporter (TC 2.A.53) family.

Its subcellular location is the membrane. In terms of biological role, possible sulfate transporter. The chain is Sulfate permease family protein 3 (sulp-3) from Caenorhabditis elegans.